Consider the following 675-residue polypeptide: Nexilin (675 aa).

Residues 1 to 66 (MNDISQKAEI…RKEQYIRERE (66 aa)) are disordered. At Lys16 the chain carries Phosphoserine. A compositionally biased stretch (basic and acidic residues) spans 27–66 (GKGDVKDKFEAMQRAREERNQRRSRDEKQRRKEQYIRERE). The residue at position 80 (Ser80) is a Phosphoserine. The segment at 105–127 (RFAEMEKQRQEEQRKRTEEERKR) is disordered. Ser241 carries the post-translational modification Phosphoserine. 2 disordered regions span residues 254–278 (LERQ…EEEK) and 313–336 (SFEE…ARRR). Ser357 and Ser365 each carry phosphoserine. The residue at position 370 (Thr370) is a Phosphothreonine. Disordered stretches follow at residues 487 to 513 (ENFH…KVNM) and 551 to 584 (LQKK…APWF). Ser564 and Ser569 each carry phosphoserine. Residues 582 to 670 (PWFKKPLKNT…GSAASTCILT (89 aa)) form the Ig-like domain.

As to quaternary structure, interacts with F-actin. Abundantly expressed in heart and skeletal muscle, and at lower levels in placenta, lung, liver and pancreas. Also expressed in HeLaS3 and MOLT-4 cell lines.

It localises to the cytoplasm. Its subcellular location is the cytoskeleton. The protein localises to the cell junction. It is found in the adherens junction. The protein resides in the myofibril. It localises to the sarcomere. Its subcellular location is the z line. Involved in regulating cell migration through association with the actin cytoskeleton. Has an essential role in the maintenance of Z line and sarcomere integrity. The chain is Nexilin from Homo sapiens (Human).